The chain runs to 330 residues: 4,5-dihydroxyphthalate decarboxylase (330 aa).

It to P.putida DHP decarboxylase.

It catalyses the reaction 4,5-dihydroxyphthalate + H(+) = 3,4-dihydroxybenzoate + CO2. The protein operates within xenobiotic degradation; phthalate degradation; 3,4-dihydroxybenzoate from phthalate: step 3/3. The sequence is that of 4,5-dihydroxyphthalate decarboxylase (phtD) from Comamonas testosteroni (Pseudomonas testosteroni).